Reading from the N-terminus, the 502-residue chain is Protein Dok-7 (502 aa).

The 106-residue stretch at 4-109 (SVVVEGYARL…WDARLRYSLG (106 aa)) folds into the PH domain. An IRS-type PTB domain is found at 105–210 (RYSLGEVHRF…RGISPTRGPF (106 aa)). Disordered stretches follow at residues 210-232 (FGLRPVLPDPSTSETSSEERLNH), 249-279 (STASYCPSAGGDDRSISGSSDTSDTSHSDCS), 291-358 (TSIQ…GSFS), and 418-482 (EVGG…GHPG). Composition is skewed to low complexity over residues 264 to 279 (ISGSSDTSDTSHSDCS) and 301 to 316 (AGAKAAAQSAEKPLPS). Residues 336 to 346 (GRQSSSDSGIA) show a composition bias toward polar residues. Positions 347–358 (TGSHSSYSGSFS) are enriched in low complexity. The span at 459-473 (PNEHFRSPSESKKSS) shows a compositional bias: basic and acidic residues.

The protein localises to the cell membrane. It localises to the synapse. In terms of biological role, probable muscle-intrinsic activator of MUSK that plays an essential role in neuromuscular synaptogenesis. Acts in aneural activation of MUSK and subsequent acetylcholine receptor (AchR) clustering in myotubes. The protein is Protein Dok-7 (dok7) of Takifugu rubripes (Japanese pufferfish).